The chain runs to 207 residues: Large ribosomal subunit protein bL25 (207 aa).

Residues 186–207 form a disordered region; that stretch reads SKPRGGAGAEGEADAEGEAAAE. Residues 196-207 are compositionally biased toward acidic residues; it reads GEADAEGEAAAE.

This sequence belongs to the bacterial ribosomal protein bL25 family. CTC subfamily. As to quaternary structure, part of the 50S ribosomal subunit; part of the 5S rRNA/L5/L18/L25 subcomplex. Contacts the 5S rRNA. Binds to the 5S rRNA independently of L5 and L18.

In terms of biological role, this is one of the proteins that binds to the 5S RNA in the ribosome where it forms part of the central protuberance. The sequence is that of Large ribosomal subunit protein bL25 from Methylobacillus flagellatus (strain ATCC 51484 / DSM 6875 / VKM B-1610 / KT).